We begin with the raw amino-acid sequence, 137 residues long: Large ribosomal subunit protein uL16 (137 aa).

It belongs to the universal ribosomal protein uL16 family. Part of the 50S ribosomal subunit.

Its function is as follows. Binds 23S rRNA and is also seen to make contacts with the A and possibly P site tRNAs. This Rhodopseudomonas palustris (strain ATCC BAA-98 / CGA009) protein is Large ribosomal subunit protein uL16.